The sequence spans 525 residues: GMP synthase [glutamine-hydrolyzing] (525 aa).

Residues 11–200 (PVLVVDFGAQ…LTEIAGLEQN (190 aa)) form the Glutamine amidotransferase type-1 domain. Cysteine 88 acts as the Nucleophile in catalysis. Residues histidine 174 and glutamate 176 contribute to the active site. A GMPS ATP-PPase domain is found at 201 to 399 (WTAANIAEEL…LGLPEEIVNR (199 aa)). An ATP-binding site is contributed by 229–235 (SGGVDSA).

Homodimer.

The catalysed reaction is XMP + L-glutamine + ATP + H2O = GMP + L-glutamate + AMP + diphosphate + 2 H(+). Its pathway is purine metabolism; GMP biosynthesis; GMP from XMP (L-Gln route): step 1/1. Its function is as follows. Catalyzes the synthesis of GMP from XMP. This Corynebacterium diphtheriae (strain ATCC 700971 / NCTC 13129 / Biotype gravis) protein is GMP synthase [glutamine-hydrolyzing].